The chain runs to 599 residues: Elongation factor 4 (599 aa).

The tr-type G domain maps to 5–187 (STIRNFAIIA…AIVHRLPAPV (183 aa)). Residues 17–22 (DHGKST) and 134–137 (NKAD) each bind GTP.

It belongs to the TRAFAC class translation factor GTPase superfamily. Classic translation factor GTPase family. LepA subfamily.

It is found in the cell inner membrane. The catalysed reaction is GTP + H2O = GDP + phosphate + H(+). Functionally, required for accurate and efficient protein synthesis under certain stress conditions. May act as a fidelity factor of the translation reaction, by catalyzing a one-codon backward translocation of tRNAs on improperly translocated ribosomes. Back-translocation proceeds from a post-translocation (POST) complex to a pre-translocation (PRE) complex, thus giving elongation factor G a second chance to translocate the tRNAs correctly. Binds to ribosomes in a GTP-dependent manner. This chain is Elongation factor 4, found in Anaplasma marginale (strain Florida).